The following is a 306-amino-acid chain: MTTIRQRIDTQHRDAIHDAQLNIYGNRLATCGSDRLVKIFEVRPNGQSYPLIELSGHNGPVWKVSWAHPKYGGLLASASYDKKVIIWQEVNGRWQKTYEWETHEASVTSVAFAPHQFGLMLASSSADGTIGILRFDAQTQQWQSSRIQNCHDQGVNSVSWAPGTADPAGKKRFVSAGNDKLVKIWLLNEELNEWTCEKAIHCHKDFVREAAWCPVTNKGQHSIVSCGLDGNLVLYRIADIETAEWKSKLLEQAPCALYHASFSPCGSFLSVSGDDNMITLWRENLQGQWIKIPRENKEREGMGQQR.

WD repeat units follow at residues 11–50, 56–97, 102–143, 150–195, 202–245, and 252–291; these read QHRD…QSYP, GHNG…WQKT, THEA…QQWQ, CHDQ…NEWT, CHKD…TAEW, and QAPC…QWIK.

Belongs to the WD repeat SEC13 family. As to quaternary structure, probably part of the GATOR complex.

It is found in the cytoplasmic vesicle. The protein localises to the COPII-coated vesicle membrane. It localises to the endoplasmic reticulum membrane. Its subcellular location is the nucleus. The protein resides in the nuclear pore complex. It is found in the lysosome membrane. Functions as a component of the nuclear pore complex (NPC) and the COPII coat. In terms of biological role, as a component of the GATOR complex may function in the amino acid-sensing branch of the TORC1 signaling pathway. This Caenorhabditis briggsae protein is Protein SEC13 homolog.